The chain runs to 387 residues: MEPPQVPAEAPQPRASEDSPRPERTGWEEPDAQPQELPEKSPSPALSGSPRVPPLSLGYGAFRRLGSCSRELPSPSPSWAEQPRDGEAELEPWTASGEPAPASWAPVELQVDVRVKPVGAAGASRAPSPAPSTRFLTVPVPESPAFARRSAPTLQWLPRAPSPGSTWSRGSPLAANATESVSPAEGCMVPPGSPACRCRCREPGLTKEDDALLQRAGIDGKKLPRAITLIGLPQYMKSLRWALVVMAVLLAVCTVAVVALASRGGTKCQPCPQGWMWSQEQCYYLSEEAQDWEGSQAFCSAHHATLPLLSHTQDFLRKYRITKGSWVGARRGPEGWHWTDGVPLPYQLFPADSEDHPDFSCGGLEEGRLVALDCSSPRPWVCARETK.

Positions 1–105 (MEPPQVPAEA…SGEPAPASWA (105 aa)) are disordered. Residues 15–27 (ASEDSPRPERTGW) are compositionally biased toward basic and acidic residues. At Ser143 the chain carries Phosphoserine. Positions 155–174 (QWLPRAPSPGSTWSRGSPLA) are disordered. Residues 241 to 261 (WALVVMAVLLAVCTVAVVALA) form a helical membrane-spanning segment. A C-type lectin domain is found at 278–383 (SQEQCYYLSE…CSSPRPWVCA (106 aa)). Intrachain disulfides connect Cys299–Cys382 and Cys361–Cys374.

It localises to the membrane. This is Killer cell lectin-like receptor subfamily G member 2 (Klrg2) from Mus musculus (Mouse).